The sequence spans 288 residues: Acetyl-coenzyme A carboxylase carboxyl transferase subunit beta (288 aa).

Residues 34–288 (LFAKCPGCKQ…TLLSFHGGVQ (255 aa)) form the CoA carboxyltransferase N-terminal domain. Residues C38, C41, C56, and C59 each contribute to the Zn(2+) site. Residues 38–59 (CPGCKQAIYQKDLGQAKICPNC) form a C4-type zinc finger.

Belongs to the AccD/PCCB family. As to quaternary structure, acetyl-CoA carboxylase is a heterohexamer composed of biotin carboxyl carrier protein (AccB), biotin carboxylase (AccC) and two subunits each of ACCase subunit alpha (AccA) and ACCase subunit beta (AccD). The cofactor is Zn(2+).

The protein resides in the cytoplasm. It catalyses the reaction N(6)-carboxybiotinyl-L-lysyl-[protein] + acetyl-CoA = N(6)-biotinyl-L-lysyl-[protein] + malonyl-CoA. It functions in the pathway lipid metabolism; malonyl-CoA biosynthesis; malonyl-CoA from acetyl-CoA: step 1/1. Functionally, component of the acetyl coenzyme A carboxylase (ACC) complex. Biotin carboxylase (BC) catalyzes the carboxylation of biotin on its carrier protein (BCCP) and then the CO(2) group is transferred by the transcarboxylase to acetyl-CoA to form malonyl-CoA. The polypeptide is Acetyl-coenzyme A carboxylase carboxyl transferase subunit beta (Streptococcus thermophilus (strain CNRZ 1066)).